The chain runs to 285 residues: Bifunctional protein FolD (285 aa).

NADP(+) contacts are provided by residues 166–168 and I232; that span reads GAS.

Belongs to the tetrahydrofolate dehydrogenase/cyclohydrolase family. In terms of assembly, homodimer.

It catalyses the reaction (6R)-5,10-methylene-5,6,7,8-tetrahydrofolate + NADP(+) = (6R)-5,10-methenyltetrahydrofolate + NADPH. The catalysed reaction is (6R)-5,10-methenyltetrahydrofolate + H2O = (6R)-10-formyltetrahydrofolate + H(+). The protein operates within one-carbon metabolism; tetrahydrofolate interconversion. Catalyzes the oxidation of 5,10-methylenetetrahydrofolate to 5,10-methenyltetrahydrofolate and then the hydrolysis of 5,10-methenyltetrahydrofolate to 10-formyltetrahydrofolate. In Actinobacillus succinogenes (strain ATCC 55618 / DSM 22257 / CCUG 43843 / 130Z), this protein is Bifunctional protein FolD.